The sequence spans 466 residues: Vimentin (466 aa).

The span at 1–13 (MSTRSVSSSSYRR) shows a compositional bias: low complexity. A disordered region spans residues 1–32 (MSTRSVSSSSYRRMFGGPGTGSRPSSTRSYVT). An N-acetylserine modification is found at S2. A head region spans residues 2–95 (STRSVSSSSY…FSLADAINTE (94 aa)). Phosphoserine occurs at positions 5, 7, 8, 9, and 10. An O-linked (GlcNAc) serine; alternate glycan is attached at S7. Residue T20 is modified to Phosphothreonine. Low complexity predominate over residues 21-32 (GSRPSSTRSYVT). Phosphoserine is present on residues S25 and S26. T33 is a glycosylation site (O-linked (GlcNAc) threonine). Phosphoserine occurs at positions 34, 39, 42, 47, 49, and 51. S34 carries an O-linked (GlcNAc) serine; alternate glycan. Y53 is modified (phosphotyrosine). S55 and S56 each carry phosphoserine. Position 61 is a phosphotyrosine (Y61). Residues S66, S72, S73, S83, and S87 each carry the phosphoserine modification. Residues 96-131 (FKNTRTNEKVELQELNDRFANYIDKVRFLEQQNKIL) are coil 1A. A coiled-coil region spans residues 96–131 (FKNTRTNEKVELQELNDRFANYIDKVRFLEQQNKIL). Residues 103–411 (EKVELQELND…KLLEGEESRI (309 aa)) form the IF rod domain. K104 participates in a covalent cross-link: Glycyl lysine isopeptide (Lys-Gly) (interchain with G-Cter in SUMO2). Y117 carries the post-translational modification Phosphotyrosine. Residues K120, K129, and K139 each carry the N6-acetyllysine; alternate modification. An N6-succinyllysine; alternate mark is found at K120 and K129. Glycyl lysine isopeptide (Lys-Gly) (interchain with G-Cter in SUMO2); alternate cross-links involve residues K120, K129, and K139. Positions 132-153 (LAELEQLKGQGKSRLGDLYEEE) are linker 1. Residue S144 is modified to Phosphoserine. Residues 154–245 (MRELRRQVDQ…KLHDEEIQEL (92 aa)) are a coiled coil. The coil 1B stretch occupies residues 154 to 245 (MRELRRQVDQ…KLHDEEIQEL (92 aa)). An N6-acetyllysine modification is found at K168. K188 carries the post-translational modification N6-acetyllysine; alternate. The residue at position 188 (K188) is an N6-succinyllysine; alternate. S214 bears the Phosphoserine mark. The residue at position 223 (K223) is an N6-acetyllysine; alternate. K223 participates in a covalent cross-link: Glycyl lysine isopeptide (Lys-Gly) (interchain with G-Cter in SUMO2); alternate. S226 is modified (phosphoserine). K235 bears the N6-acetyllysine mark. The tract at residues 246–268 (QAQIQDQHVQIDMDVSKPDLTAA) is linker 12. K262 is covalently cross-linked (Glycyl lysine isopeptide (Lys-Gly) (interchain with G-Cter in SUMO2)). A coil 2 region spans residues 269-407 (LRDVRQQYES…ATYRKLLEGE (139 aa)). N6-acetyllysine; alternate is present on K294. Residue K294 is modified to N6-succinyllysine; alternate. A Glycyl lysine isopeptide (Lys-Gly) (interchain with G-Cter in SUMO2); alternate cross-link involves residue K294. S299 is modified (phosphoserine). The stretch at 303–407 (NRNNDALRQA…ATYRKLLEGE (105 aa)) forms a coiled coil. K313 participates in a covalent cross-link: Glycyl lysine isopeptide (Lys-Gly) (interchain with G-Cter in SUMO2). S325 carries the phosphoserine modification. The [IL]-x-C-x-x-[DE] motif motif lies at 326–329 (LTCE). K373 is subject to N6-acetyllysine; alternate. Residue K373 forms a Glycyl lysine isopeptide (Lys-Gly) (interchain with G-Cter in SUMO2); alternate linkage. The tract at residues 408–466 (ESRIALPLPNFSSLNLRETNLDSLPLVDTHSKRTLLIKTVETRDGQVINETSQHHDDLE) is tail. 3 positions are modified to phosphoserine: S409, S419, and S420. At T426 the chain carries Phosphothreonine. S430 is subject to Phosphoserine. At T436 the chain carries Phosphothreonine. S438 is modified (phosphoserine). A Glycyl lysine isopeptide (Lys-Gly) (interchain with G-Cter in SUMO2) cross-link involves residue K439. N6-acetyllysine; alternate is present on K445. Residue K445 is modified to N6-succinyllysine; alternate. K445 participates in a covalent cross-link: Glycyl lysine isopeptide (Lys-Gly) (interchain with G-Cter in SUMO2); alternate. A Glycyl lysine isopeptide (Lys-Gly) (interchain with G-Cter in SUMO1); alternate cross-link involves residue K445. T446 and T458 each carry phosphothreonine. S459 bears the Phosphoserine mark.

It belongs to the intermediate filament family. As to quaternary structure, homomer assembled from elementary dimers. Identified in complexes that contain VIM, EZR, AHNAK, BFSP1, BFSP2, ANK2, PLEC, PRX and spectrin. Interacts with BCAS3. Interacts with LGSN. Interacts with SYNM. Interacts (via rod region) with PLEC (via CH 1 domain). Interacts with STK33. Interacts with LARP6. Interacts with RAB8B. Interacts with TOR1A; the interaction associates TOR1A with the cytoskeleton. Interacts with TOR1AIP1. Interacts with TOR1AIP1. Interacts with DIAPH1. Interacts with EPPK1; interaction is dependent of higher-order structure of intermediate filament. Interacts with the non-receptor tyrosine kinase SRMS; the interaction leads to phosphorylation of VIM. Interacts with NOD2. Interacts (via head region) with CORO1C. Interacts with HDGF. Interacts with PRKCE (via phorbol-ester/DAG-type 2 domain). Interacts with BFSP2. Interacts with PPL. Interacts with PKP1 and PKP2. Interacts with SCRIB (via PDZ domains); the interaction protects SCRIB from proteasomal degradation and facilitates SCRIB localization to intermediate filaments, the interaction is reduced by cell contact inhibition. Post-translationally, filament disassembly during mitosis is promoted by phosphorylation at Ser-55 as well as by nestin. One of the most prominent phosphoproteins in various cells of mesenchymal origin. Phosphorylation is enhanced during cell division, at which time vimentin filaments are significantly reorganized. Phosphorylation by PKN1 inhibits the formation of filaments. Phosphorylated at Ser-56 by CDK5 during neutrophil secretion in the cytoplasm. Phosphorylated by STK33. Phosphorylated on tyrosine residues by SRMS. In terms of processing, O-glycosylated during cytokinesis at sites identical or close to phosphorylation sites, this interferes with the phosphorylation status. S-nitrosylation is induced by interferon-gamma and oxidatively-modified low-densitity lipoprotein (LDL(ox)) possibly implicating the iNOS-S100A8/9 transnitrosylase complex.

The protein localises to the cytoplasm. The protein resides in the cytoskeleton. It localises to the nucleus matrix. Its subcellular location is the cell membrane. Functionally, vimentins are class-III intermediate filaments found in various non-epithelial cells, especially mesenchymal cells. Vimentin is attached to the nucleus, endoplasmic reticulum, and mitochondria, either laterally or terminally. Plays a role in cell directional movement, orientation, cell sheet organization and Golgi complex polarization at the cell migration front. Protects SCRIB from proteasomal degradation and facilitates its localization to intermediate filaments in a cell contact-mediated manner. In terms of biological role, involved with LARP6 in the stabilization of type I collagen mRNAs for CO1A1 and CO1A2. The sequence is that of Vimentin (VIM) from Canis lupus familiaris (Dog).